Here is a 123-residue protein sequence, read N- to C-terminus: uncharacterized protein (123 aa).

A helical membrane pass occupies residues Leu-34–Leu-53.

The protein resides in the membrane. This is an uncharacterized protein from Saccharomyces cerevisiae (strain ATCC 204508 / S288c) (Baker's yeast).